Reading from the N-terminus, the 205-residue chain is Glycerol-3-phosphate acyltransferase (205 aa).

6 consecutive transmembrane segments (helical) span residues 5–25, 56–76, 84–104, 114–134, 144–164, and 165–185; these read LIATVLFGYLLGSVSFSYIIA, ICVLLLDVAKGVAPALLAIAL, VPALAGLAAILGHNWPIYFGF, IGVVATLLFLPALCAGIVAIL, LGSLLFAVLTPIAALIMLPFF, and HYPLEYIYLAVLLAILSLWRH.

The protein belongs to the PlsY family. Probably interacts with PlsX.

It localises to the cell membrane. The catalysed reaction is an acyl phosphate + sn-glycerol 3-phosphate = a 1-acyl-sn-glycero-3-phosphate + phosphate. It participates in lipid metabolism; phospholipid metabolism. Its function is as follows. Catalyzes the transfer of an acyl group from acyl-phosphate (acyl-PO(4)) to glycerol-3-phosphate (G3P) to form lysophosphatidic acid (LPA). This enzyme utilizes acyl-phosphate as fatty acyl donor, but not acyl-CoA or acyl-ACP. The sequence is that of Glycerol-3-phosphate acyltransferase from Shouchella clausii (strain KSM-K16) (Alkalihalobacillus clausii).